Here is a 196-residue protein sequence, read N- to C-terminus: Ribonuclease HII (196 aa).

The region spanning 13-196 (LLVAGVDEAG…SFSPLKKKLF (184 aa)) is the RNase H type-2 domain. 3 residues coordinate a divalent metal cation: D19, E20, and D111.

The protein belongs to the RNase HII family. Mn(2+) is required as a cofactor. It depends on Mg(2+) as a cofactor.

The protein localises to the cytoplasm. The catalysed reaction is Endonucleolytic cleavage to 5'-phosphomonoester.. Functionally, endonuclease that specifically degrades the RNA of RNA-DNA hybrids. The chain is Ribonuclease HII (rnhB) from Aquifex aeolicus (strain VF5).